The sequence spans 255 residues: MLLVIDVGNTNTVVGLYEGQTLAYNWRITTDKGRTGDEYAMLLHELLRLAGVTFDRIEDVIVSSVVPPTLQAIESLCRKYVGRSPYVVGPGIKTGMPILYENPREVGADRIVNAVAAFARWQRSLIVVDFGTATTFDYINAKGQYHGGAIAPGLKISADALFDKASKLPRVEVSRPPTVVAKNTVNSIQAGLFYGYVGLVDGIVERMRKETRDDPLVVATGGLATLIADETQTIHEVESDLTLEGLRILYLRNKG.

6–13 lines the ATP pocket; the sequence is DVGNTNTV. Substrate-binding positions include Tyr100 and 107 to 110; that span reads GADR. Asp109 serves as the catalytic Proton acceptor. Residue Asp129 participates in K(+) binding. Thr132 contacts ATP. Residue Thr184 participates in substrate binding.

Belongs to the type III pantothenate kinase family. As to quaternary structure, homodimer. NH4(+) is required as a cofactor. Requires K(+) as cofactor.

The protein localises to the cytoplasm. It catalyses the reaction (R)-pantothenate + ATP = (R)-4'-phosphopantothenate + ADP + H(+). It participates in cofactor biosynthesis; coenzyme A biosynthesis; CoA from (R)-pantothenate: step 1/5. Catalyzes the phosphorylation of pantothenate (Pan), the first step in CoA biosynthesis. The chain is Type III pantothenate kinase from Syntrophotalea carbinolica (strain DSM 2380 / NBRC 103641 / GraBd1) (Pelobacter carbinolicus).